The chain runs to 212 residues: MTDLSDIRREYTKGGLRRADLPQNPMQLFELWMTQARDAELSDPTAMCVATVDEHGQPYQRIVLLKRFDDTGFVFFTNLGSRKAQQIAANNKVSLHFPWHSIERQVSILGEAQPLSTAEVLKYFMTRPKDSQIAAWVSQQSSKLSARQVLEGKFFEMKAKFAKGDVPLPSFWGGYLVKPSSIEFWQGGEHRLHDRFLYTRQADEWVIDRLAP.

Substrate contacts are provided by residues 8 to 11 (RREY) and K66. FMN contacts are provided by residues 61-66 (RIVLLK), 76-77 (FT), R82, K83, and Q105. Substrate is bound by residues Y123, R127, and S131. Residues 140 to 141 (QS) and W185 each bind FMN. Residue 191 to 193 (RLH) participates in substrate binding. FMN is bound at residue R195.

This sequence belongs to the pyridoxamine 5'-phosphate oxidase family. In terms of assembly, homodimer. It depends on FMN as a cofactor.

The catalysed reaction is pyridoxamine 5'-phosphate + O2 + H2O = pyridoxal 5'-phosphate + H2O2 + NH4(+). It carries out the reaction pyridoxine 5'-phosphate + O2 = pyridoxal 5'-phosphate + H2O2. The protein operates within cofactor metabolism; pyridoxal 5'-phosphate salvage; pyridoxal 5'-phosphate from pyridoxamine 5'-phosphate: step 1/1. Its pathway is cofactor metabolism; pyridoxal 5'-phosphate salvage; pyridoxal 5'-phosphate from pyridoxine 5'-phosphate: step 1/1. Catalyzes the oxidation of either pyridoxine 5'-phosphate (PNP) or pyridoxamine 5'-phosphate (PMP) into pyridoxal 5'-phosphate (PLP). The sequence is that of Pyridoxine/pyridoxamine 5'-phosphate oxidase from Shewanella sp. (strain MR-7).